A 261-amino-acid polypeptide reads, in one-letter code: Cytochrome c oxidase subunit 3 (261 aa).

The Mitochondrial matrix segment spans residues 1–15 (MTHQTHAYHMVNPSP). Residues 16-34 (WPLTGALSALLMTSGLIMW) form a helical membrane-spanning segment. At 35–40 (FHFNST) the chain is on the mitochondrial intermembrane side. A helical transmembrane segment spans residues 41–66 (ILLMLGLTTNMLTMYQWWRDVIREST). At 67–72 (FQGHHT) the chain is on the mitochondrial matrix side. A helical membrane pass occupies residues 73–105 (PNVQKGLRYGMILFIISEVLFFTGFFWAFYHSS). Residues 106–128 (LAPTPELGGCWPPTGIHPLNPLE) are Mitochondrial intermembrane-facing. A helical transmembrane segment spans residues 129 to 152 (VPLLNTSVLLASGVSITWAHHSLM). Over 153–155 (EGN) the chain is Mitochondrial matrix. The chain crosses the membrane as a helical span at residues 156–183 (RNHMLQALFITIALGVYFTLLQASEYYE). Residues 184 to 190 (APFTISD) are Mitochondrial intermembrane-facing. Residues 191–223 (GVYGSTFFVATGFHGLHVIIGSTFLIVCFFRQL) traverse the membrane as a helical segment. Over 224 to 232 (KFHFTSNHH) the chain is Mitochondrial matrix. Residues 233-256 (FGFEAAAWYWHFVDVVWLFLYVSI) form a helical membrane-spanning segment. Over 257-261 (YWWGS) the chain is Mitochondrial intermembrane.

The protein belongs to the cytochrome c oxidase subunit 3 family. In terms of assembly, component of the cytochrome c oxidase (complex IV, CIV), a multisubunit enzyme composed of 14 subunits. The complex is composed of a catalytic core of 3 subunits MT-CO1, MT-CO2 and MT-CO3, encoded in the mitochondrial DNA, and 11 supernumerary subunits COX4I, COX5A, COX5B, COX6A, COX6B, COX6C, COX7A, COX7B, COX7C, COX8 and NDUFA4, which are encoded in the nuclear genome. The complex exists as a monomer or a dimer and forms supercomplexes (SCs) in the inner mitochondrial membrane with NADH-ubiquinone oxidoreductase (complex I, CI) and ubiquinol-cytochrome c oxidoreductase (cytochrome b-c1 complex, complex III, CIII), resulting in different assemblies (supercomplex SCI(1)III(2)IV(1) and megacomplex MCI(2)III(2)IV(2)).

The protein localises to the mitochondrion inner membrane. It carries out the reaction 4 Fe(II)-[cytochrome c] + O2 + 8 H(+)(in) = 4 Fe(III)-[cytochrome c] + 2 H2O + 4 H(+)(out). In terms of biological role, component of the cytochrome c oxidase, the last enzyme in the mitochondrial electron transport chain which drives oxidative phosphorylation. The respiratory chain contains 3 multisubunit complexes succinate dehydrogenase (complex II, CII), ubiquinol-cytochrome c oxidoreductase (cytochrome b-c1 complex, complex III, CIII) and cytochrome c oxidase (complex IV, CIV), that cooperate to transfer electrons derived from NADH and succinate to molecular oxygen, creating an electrochemical gradient over the inner membrane that drives transmembrane transport and the ATP synthase. Cytochrome c oxidase is the component of the respiratory chain that catalyzes the reduction of oxygen to water. Electrons originating from reduced cytochrome c in the intermembrane space (IMS) are transferred via the dinuclear copper A center (CU(A)) of subunit 2 and heme A of subunit 1 to the active site in subunit 1, a binuclear center (BNC) formed by heme A3 and copper B (CU(B)). The BNC reduces molecular oxygen to 2 water molecules using 4 electrons from cytochrome c in the IMS and 4 protons from the mitochondrial matrix. The sequence is that of Cytochrome c oxidase subunit 3 (MT-CO3) from Eudorcas thomsonii (Thomson's gazelle).